Reading from the N-terminus, the 221-residue chain is Imidazoleglycerol-phosphate dehydratase (221 aa).

The protein belongs to the imidazoleglycerol-phosphate dehydratase family.

It catalyses the reaction D-erythro-1-(imidazol-4-yl)glycerol 3-phosphate = 3-(imidazol-4-yl)-2-oxopropyl phosphate + H2O. Its pathway is amino-acid biosynthesis; L-histidine biosynthesis; L-histidine from 5-phospho-alpha-D-ribose 1-diphosphate: step 6/9. The chain is Imidazoleglycerol-phosphate dehydratase (HIS3) from Kluyveromyces lactis (strain ATCC 8585 / CBS 2359 / DSM 70799 / NBRC 1267 / NRRL Y-1140 / WM37) (Yeast).